The following is a 257-amino-acid chain: uncharacterized protein (257 aa).

Positions 74–83 (LKDDLTRDNS) are enriched in basic and acidic residues. Disordered regions lie at residues 74 to 115 (LKDD…TQKR) and 209 to 257 (PYLN…YDSF). Residues 100-113 (SFQNMNSSMPSSTQ) show a composition bias toward polar residues. Acidic residues predominate over residues 216 to 236 (SEDDTDSSIVEVETDYSEEEK).

Belongs to the asfivirus DP238L family.

This is an uncharacterized protein from Ornithodoros (relapsing fever ticks).